The sequence spans 469 residues: Argininosuccinate lyase (469 aa).

It belongs to the lyase 1 family. Argininosuccinate lyase subfamily.

It is found in the cytoplasm. The catalysed reaction is 2-(N(omega)-L-arginino)succinate = fumarate + L-arginine. The protein operates within amino-acid biosynthesis; L-arginine biosynthesis; L-arginine from L-ornithine and carbamoyl phosphate: step 3/3. This is Argininosuccinate lyase from Burkholderia thailandensis (strain ATCC 700388 / DSM 13276 / CCUG 48851 / CIP 106301 / E264).